The chain runs to 218 residues: Small ribosomal subunit protein uS3c (218 aa).

In terms of domain architecture, KH type-2 spans 47–118; the sequence is VQKNMKTSSG…KLNIAITRIE (72 aa).

This sequence belongs to the universal ribosomal protein uS3 family. Part of the 30S ribosomal subunit.

It is found in the plastid. Its subcellular location is the chloroplast. This chain is Small ribosomal subunit protein uS3c (rps3), found in Helianthus annuus (Common sunflower).